A 461-amino-acid polypeptide reads, in one-letter code: ATP synthase subunit beta (461 aa).

151-158 lines the ATP pocket; sequence GGAGVGKT.

This sequence belongs to the ATPase alpha/beta chains family. As to quaternary structure, F-type ATPases have 2 components, CF(1) - the catalytic core - and CF(0) - the membrane proton channel. CF(1) has five subunits: alpha(3), beta(3), gamma(1), delta(1), epsilon(1). CF(0) has three main subunits: a(1), b(2) and c(9-12). The alpha and beta chains form an alternating ring which encloses part of the gamma chain. CF(1) is attached to CF(0) by a central stalk formed by the gamma and epsilon chains, while a peripheral stalk is formed by the delta and b chains.

It is found in the cell inner membrane. It carries out the reaction ATP + H2O + 4 H(+)(in) = ADP + phosphate + 5 H(+)(out). Produces ATP from ADP in the presence of a proton gradient across the membrane. The catalytic sites are hosted primarily by the beta subunits. This is ATP synthase subunit beta from Colwellia psychrerythraea (strain 34H / ATCC BAA-681) (Vibrio psychroerythus).